A 360-amino-acid chain; its full sequence is DNA replication and repair protein RecF (360 aa).

33-40 provides a ligand contact to ATP; the sequence is GENGSGKT.

Belongs to the RecF family.

Its subcellular location is the cytoplasm. The RecF protein is involved in DNA metabolism; it is required for DNA replication and normal SOS inducibility. RecF binds preferentially to single-stranded, linear DNA. It also seems to bind ATP. The chain is DNA replication and repair protein RecF from Rickettsia canadensis (strain McKiel).